The chain runs to 452 residues: UDP-N-acetylmuramoylalanine--D-glutamate ligase (452 aa).

ATP is bound at residue 119–125 (GSNGKTT).

This sequence belongs to the MurCDEF family.

It is found in the cytoplasm. It carries out the reaction UDP-N-acetyl-alpha-D-muramoyl-L-alanine + D-glutamate + ATP = UDP-N-acetyl-alpha-D-muramoyl-L-alanyl-D-glutamate + ADP + phosphate + H(+). It functions in the pathway cell wall biogenesis; peptidoglycan biosynthesis. Its function is as follows. Cell wall formation. Catalyzes the addition of glutamate to the nucleotide precursor UDP-N-acetylmuramoyl-L-alanine (UMA). In Streptococcus pyogenes serotype M5 (strain Manfredo), this protein is UDP-N-acetylmuramoylalanine--D-glutamate ligase.